A 1278-amino-acid chain; its full sequence is SMC5-SMC6 complex localization factor protein 2 (1278 aa).

Disordered regions lie at residues 1-235, 248-337, 443-491, and 509-582; these read MTRR…LGAR, EQKK…KRTE, RINS…FIRH, and EPED…KETK. Residues 39-50 show a composition bias toward basic and acidic residues; the sequence is KRTESPGDRKQS. Over residues 94-103 the composition is skewed to basic residues; the sequence is SSPKKLKPKR. 4 stretches are compositionally biased toward basic and acidic residues: residues 118–133, 156–174, 180–199, and 248–258; these read GGKE…ESRR, LPKE…ERRK, ESNR…DSRK, and EQKKLRKEQME. Polar residues-rich tracts occupy residues 259–277 and 318–329; these read QRIN…SLKS and SDSWELSGSKQN. 2 stretches are compositionally biased toward basic and acidic residues: residues 449–463 and 469–489; these read KEQR…KSTK and KARE…EKFI. The segment covering 519–540 has biased composition (polar residues); that stretch reads ADSAPSNAGHHSSRNSDQVHSA. S591 bears the Phosphoserine mark. 3 disordered regions span residues 598-724, 739-764, and 798-820; these read PLNA…EEEE, RTPT…MKEY, and IRQG…DDGD. Basic and acidic residues predominate over residues 609 to 630; the sequence is PKKDKERSSSKERSGHSTESSK. Composition is skewed to low complexity over residues 643–654, 666–675, and 688–697; these read SNESSGKNSGGS, PPAALEVVPS, and SGNSNAGSNA. A compositionally biased stretch (acidic residues) spans 707 to 724; the sequence is DSDEESLGYTLESDEEEE. A phosphoserine mark is found at S708, S712, and S719. The segment at 740–1278 is interaction with SIMC1; it reads TPTTSGKPPA…QLHDFWVPDS (539 aa). The segment at 769–1271 is NSE6-like domain; the sequence is TYTNTLERLV…NCRPTQGQLH (503 aa). Positions 807–1278 are required for interaction with SLF1 and RAD18; sequence PLRTGDQDST…QLHDFWVPDS (472 aa).

It belongs to the FAM178 family. Forms a heterodimer with SIMC1. Interacts with SLF1 (via N-terminus); this interaction links RAD18 to the SMC5-SMC6 complex. Interacts with RAD18; this interaction is increased in a SLF1-dependent manner. Interacts with SMC5 and SMC6.

Its subcellular location is the nucleus. It is found in the PML body. Plays a role in the DNA damage response (DDR) pathway by regulating postreplication repair of UV-damaged DNA and genomic stability maintenance. The SLF1-SLF2 complex acts to link RAD18 with the SMC5-SMC6 complex at replication-coupled interstrand cross-links (ICL) and DNA double-strand breaks (DSBs) sites on chromatin during DNA repair in response to stalled replication forks. Promotes the recruitment of the SMC5-SMC6 complex to DNA lesions. May play a role in SMC5-SMC6 complex recruitment for viral restriction. Forms a complex with SIMC1 and this complex is required to recruit SMC5-SMC6 complex to PML nuclear bodies and sites of viral replication. In Mus musculus (Mouse), this protein is SMC5-SMC6 complex localization factor protein 2.